Here is a 156-residue protein sequence, read N- to C-terminus: Superoxide dismutase [Cu-Zn] 2 (156 aa).

3 residues coordinate Cu cation: His47, His49, and His64. Residues Cys58 and Cys147 are joined by a disulfide bond. Zn(2+)-binding residues include His64, His72, His81, and Asp84. His121 contacts Cu cation.

This sequence belongs to the Cu-Zn superoxide dismutase family. In terms of assembly, homodimer. Cu cation serves as cofactor. It depends on Zn(2+) as a cofactor.

Its subcellular location is the cytoplasm. The enzyme catalyses 2 superoxide + 2 H(+) = H2O2 + O2. Destroys radicals which are normally produced within the cells and which are toxic to biological systems. The protein is Superoxide dismutase [Cu-Zn] 2 (SODCC.2) of Mesembryanthemum crystallinum (Common ice plant).